The following is a 178-amino-acid chain: HTH-type transcriptional regulator SutR (178 aa).

The 55-residue stretch at 12-66 (LKQLRQQRGWSLSRLAEATGVSKAMLGQIERNESSPTVATLWKIATGLNVPFSTF) folds into the HTH cro/C1-type domain. The H-T-H motif DNA-binding region spans 23–42 (LSRLAEATGVSKAMLGQIER). Residues 105 to 171 (QMASGAISES…GGEQTVHFHS (67 aa)) form the Cupin type-2 domain.

Regulates the expression of 12-16 transcription units involved in various steps of sulfur utilization. Represses expression of pfkB, fliZ, cysE, ydcO and its own expression. Activates expression of ypfN. Acts by binding to SutR boxes. The sequence is that of HTH-type transcriptional regulator SutR from Escherichia coli (strain K12).